Consider the following 199-residue polypeptide: ATP-dependent Clp protease proteolytic subunit 2 (199 aa).

Ser-98 serves as the catalytic Nucleophile. The active site involves His-123.

The protein belongs to the peptidase S14 family. In terms of assembly, fourteen ClpP subunits assemble into 2 heptameric rings which stack back to back to give a disk-like structure with a central cavity, resembling the structure of eukaryotic proteasomes.

It is found in the cytoplasm. It catalyses the reaction Hydrolysis of proteins to small peptides in the presence of ATP and magnesium. alpha-casein is the usual test substrate. In the absence of ATP, only oligopeptides shorter than five residues are hydrolyzed (such as succinyl-Leu-Tyr-|-NHMec, and Leu-Tyr-Leu-|-Tyr-Trp, in which cleavage of the -Tyr-|-Leu- and -Tyr-|-Trp bonds also occurs).. Cleaves peptides in various proteins in a process that requires ATP hydrolysis. Has a chymotrypsin-like activity. Plays a major role in the degradation of misfolded proteins. The sequence is that of ATP-dependent Clp protease proteolytic subunit 2 from Treponema pallidum (strain Nichols).